Consider the following 296-residue polypeptide: Sulfotransferase 1E1 (296 aa).

Lysine 49 to tryptophan 54 is a binding site for 3'-phosphoadenylyl sulfate. Residue lysine 107–histidine 109 coordinates substrate. Histidine 109 functions as the Proton acceptor in the catalytic mechanism. 3'-phosphoadenylyl sulfate-binding positions include arginine 131, serine 139, tyrosine 194, threonine 228 to methionine 233, and arginine 258 to glycine 260.

The protein belongs to the sulfotransferase 1 family. Homodimer. The N-terminus is blocked. Adrenal gland and much less in liver. Detectable only during pregnancy in uterine.

The protein localises to the cytoplasm. It localises to the cytosol. The enzyme catalyses estrone + 3'-phosphoadenylyl sulfate = estrone 3-sulfate + adenosine 3',5'-bisphosphate + H(+). The catalysed reaction is (24S)-hydroxycholesterol + 3'-phosphoadenylyl sulfate = (24S)-hydroxycholesterol 3-sulfate + adenosine 3',5'-bisphosphate + H(+). It carries out the reaction 17beta-estradiol + 3'-phosphoadenylyl sulfate = 17beta-estradiol 3-sulfate + adenosine 3',5'-bisphosphate + H(+). It catalyses the reaction 3beta-hydroxyandrost-5-en-17-one + 3'-phosphoadenylyl sulfate = dehydroepiandrosterone 3-sulfate + adenosine 3',5'-bisphosphate + H(+). The enzyme catalyses 4-ethylphenol + 3'-phosphoadenylyl sulfate = 4-ethylphenyl sulfate + adenosine 3',5'-bisphosphate + H(+). Inhibited by estradiol. Sulfotransferase that utilizes 3'-phospho-5'-adenylyl sulfate (PAPS) as sulfonate donor to catalyze the sulfate conjugation of estradiol and estrone. Is a key enzyme in estrogen homeostasis, the sulfation of estrogens leads to their inactivation. Also sulfates dehydroepiandrosterone (DHEA), pregnenolone, (24S)-hydroxycholesteroland xenobiotic compounds like ethinylestradiol, equalenin, diethyl stilbesterol and 1-naphthol at significantly lower efficiency. Does not sulfonate cortisol, testosterone and dopamine. May play a role in gut microbiota-host metabolic interaction. O-sulfonates 4-ethylphenol (4-EP), a dietary tyrosine-derived metabolite produced by gut bacteria. The product 4-EPS crosses the blood-brain barrier and may negatively regulate oligodendrocyte maturation and myelination, affecting the functional connectivity of different brain regions associated with the limbic system. The chain is Sulfotransferase 1E1 (SULT1E1) from Cavia porcellus (Guinea pig).